A 671-amino-acid polypeptide reads, in one-letter code: tRNA(Met) cytidine acetyltransferase TmcA (671 aa).

ATP contacts are provided by residues Gln180, 202-211 (GRGKSALAGQ), and Arg319. The 176-residue stretch at 356-531 (QTLWRSEPET…SGCYTAMALL (176 aa)) folds into the N-acetyltransferase domain. Acetyl-CoA-binding positions include 461-463 (IAV), 468-474 (QREGTGR), Glu499, and Arg506.

This sequence belongs to the RNA cytidine acetyltransferase family. TmcA subfamily.

The protein resides in the cytoplasm. It catalyses the reaction cytidine(34) in elongator tRNA(Met) + acetyl-CoA + ATP + H2O = N(4)-acetylcytidine(34) in elongator tRNA(Met) + ADP + phosphate + CoA + H(+). Catalyzes the formation of N(4)-acetylcytidine (ac(4)C) at the wobble position of tRNA(Met), by using acetyl-CoA as an acetyl donor and ATP (or GTP). This chain is tRNA(Met) cytidine acetyltransferase TmcA, found in Shigella flexneri serotype 5b (strain 8401).